The primary structure comprises 306 residues: Armadillo repeat-containing protein 10 (306 aa).

The helical transmembrane segment at 7-29 threads the bilayer; sequence VGWVAAGLVLGAGACYCIYRLTR. Ser43 is modified (phosphoserine). Thr48 carries the phosphothreonine modification. The stretch at 101–143 is one ARM repeat; the sequence is GGIPIVGSKINSLNQSIKEKALNALNNLSVNVENQTKIKIYVR.

In terms of assembly, interacts with the DNA-binding domain of p53/TP53.

It is found in the endoplasmic reticulum membrane. The protein localises to the mitochondrion outer membrane. May play a role in cell survival and cell growth. May suppress the transcriptional activity of p53/TP53. In Rattus norvegicus (Rat), this protein is Armadillo repeat-containing protein 10 (Armc10).